The chain runs to 200 residues: GTP cyclohydrolase-2 (200 aa).

49 to 53 (RVHSE) contributes to the GTP binding site. Zn(2+) contacts are provided by C54, C65, and C67. Residues Q70, 92–94 (EGR), and T114 each bind GTP. The active-site Proton acceptor is the D126. R128 acts as the Nucleophile in catalysis. T149 and K154 together coordinate GTP.

The protein belongs to the GTP cyclohydrolase II family. Homodimer. The cofactor is Zn(2+).

It carries out the reaction GTP + 4 H2O = 2,5-diamino-6-hydroxy-4-(5-phosphoribosylamino)-pyrimidine + formate + 2 phosphate + 3 H(+). Its pathway is cofactor biosynthesis; riboflavin biosynthesis; 5-amino-6-(D-ribitylamino)uracil from GTP: step 1/4. Its function is as follows. Catalyzes the conversion of GTP to 2,5-diamino-6-ribosylamino-4(3H)-pyrimidinone 5'-phosphate (DARP), formate and pyrophosphate. This is GTP cyclohydrolase-2 from Klebsiella pneumoniae subsp. pneumoniae (strain ATCC 700721 / MGH 78578).